The primary structure comprises 205 residues: UPF0301 protein Bind_0718 (205 aa).

This sequence belongs to the UPF0301 (AlgH) family.

This chain is UPF0301 protein Bind_0718, found in Beijerinckia indica subsp. indica (strain ATCC 9039 / DSM 1715 / NCIMB 8712).